The primary structure comprises 64 residues: Large ribosomal subunit protein bL35 (64 aa).

The protein belongs to the bacterial ribosomal protein bL35 family.

This is Large ribosomal subunit protein bL35 from Shewanella sediminis (strain HAW-EB3).